A 377-amino-acid chain; its full sequence is Chaperone protein DnaJ (377 aa).

The region spanning 8–73 is the J domain; it reads CYYETLEVER…DKRAAYDRFG (66 aa). The CR-type zinc finger occupies 135–213; sequence GKTAQIEIPV…CSGQGRVTRE (79 aa). Cys-148, Cys-151, Cys-165, Cys-168, Cys-187, Cys-190, Cys-201, and Cys-204 together coordinate Zn(2+). 4 CXXCXGXG motif repeats span residues 148–155, 165–172, 187–194, and 201–208; these read CEACSGIG, CSTCGGAG, CPGCQGRG, and CPSCSGQG.

This sequence belongs to the DnaJ family. Homodimer. Zn(2+) serves as cofactor.

It localises to the cytoplasm. Functionally, participates actively in the response to hyperosmotic and heat shock by preventing the aggregation of stress-denatured proteins and by disaggregating proteins, also in an autonomous, DnaK-independent fashion. Unfolded proteins bind initially to DnaJ; upon interaction with the DnaJ-bound protein, DnaK hydrolyzes its bound ATP, resulting in the formation of a stable complex. GrpE releases ADP from DnaK; ATP binding to DnaK triggers the release of the substrate protein, thus completing the reaction cycle. Several rounds of ATP-dependent interactions between DnaJ, DnaK and GrpE are required for fully efficient folding. Also involved, together with DnaK and GrpE, in the DNA replication of plasmids through activation of initiation proteins. The protein is Chaperone protein DnaJ of Bradyrhizobium diazoefficiens (strain JCM 10833 / BCRC 13528 / IAM 13628 / NBRC 14792 / USDA 110).